Consider the following 92-residue polypeptide: MTKLEDHLEGIINIFHQYSVRLGHYDTLIKRELKQLITKELPNTLKNTKDQGTIDKIFQNLDANQDEQVSFKEFVVLVTDVLITAHDNIHKE.

EF-hand domains lie at 13–48 and 49–84; these read NIFH…LKNT and KDQG…VLIT. Cu cation is bound at residue H16. H16 contacts Zn(2+). Ca(2+)-binding residues include S19 and H24. D26 provides a ligand contact to Cu cation. D26 is a binding site for Zn(2+). Ca(2+) is bound by residues T27 and E32. The segment at 38 to 53 is hinge domain; the sequence is TKELPNTLKNTKDQGT. 5 residues coordinate Ca(2+): D62, N64, D66, Q68, and E73. Residues H86 and H90 each coordinate Cu cation. Zn(2+) contacts are provided by H86 and H90.

It belongs to the S-100 family. Homodimer. Homooligomer (tetramer or hexamer) in the presence of calcium, zinc and copper ions. Interacts with AGER and both calcium and zinc are essential for the interaction. Interacts with CACYBP in a calcium-dependent manner. In terms of tissue distribution, found essentially in granulocytes with small amounts found in lymphocytes.

Its subcellular location is the secreted. The protein localises to the cytoplasm. It is found in the cytoskeleton. It localises to the cell membrane. Its function is as follows. S100A12 is a calcium-, zinc- and copper-binding protein which plays a prominent role in the regulation of inflammatory processes and immune response. Its pro-inflammatory activity involves recruitment of leukocytes, promotion of cytokine and chemokine production, and regulation of leukocyte adhesion and migration. Acts as an alarmin or a danger associated molecular pattern (DAMP) molecule and stimulates innate immune cells via binding to receptor for advanced glycation endproducts (AGER). Binding to AGER activates the MAP-kinase and NF-kappa-B signaling pathways leading to production of pro-inflammatory cytokines and up-regulation of cell adhesion molecules ICAM1 and VCAM1. Acts as a monocyte and mast cell chemoattractant. Can stimulate mast cell degranulation and activation which generates chemokines, histamine and cytokines inducing further leukocyte recruitment to the sites of inflammation. Can inhibit the activity of matrix metalloproteinases; MMP2, MMP3 and MMP9 by chelating Zn(2+) from their active sites. In Sus scrofa (Pig), this protein is Protein S100-A12 (S100A12).